The sequence spans 446 residues: Tubulin alpha-2 chain (446 aa).

An MREC motif motif is present at residues 1 to 4 (MREC). GTP contacts are provided by Gln11, Glu68, Ser137, Gly141, Thr142, Ser176, Asn203, and Asn225. Residue Glu68 coordinates Mg(2+). Residue Glu251 is part of the active site.

Belongs to the tubulin family. As to quaternary structure, dimer of alpha and beta chains. A typical microtubule is a hollow water-filled tube with an outer diameter of 25 nm and an inner diameter of 15 nM. Alpha-beta heterodimers associate head-to-tail to form protofilaments running lengthwise along the microtubule wall with the beta-tubulin subunit facing the microtubule plus end conferring a structural polarity. Microtubules usually have 13 protofilaments but different protofilament numbers can be found in some organisms and specialized cells. The cofactor is Mg(2+). In terms of processing, some glutamate residues at the C-terminus are polyglycylated, resulting in polyglycine chains on the gamma-carboxyl group. Glycylation is mainly limited to tubulin incorporated into axonemes (cilia and flagella) whereas glutamylation is prevalent in neuronal cells, centrioles, axonemes, and the mitotic spindle. Both modifications can coexist on the same protein on adjacent residues, and lowering polyglycylation levels increases polyglutamylation, and reciprocally. The precise function of polyglycylation is still unclear. Some glutamate residues at the C-terminus are polyglutamylated, resulting in polyglutamate chains on the gamma-carboxyl group. Polyglutamylation plays a key role in microtubule severing by spastin (SPAST). SPAST preferentially recognizes and acts on microtubules decorated with short polyglutamate tails: severing activity by SPAST increases as the number of glutamates per tubulin rises from one to eight, but decreases beyond this glutamylation threshold. Testis specific.

The protein localises to the cytoplasm. It is found in the cytoskeleton. The enzyme catalyses GTP + H2O = GDP + phosphate + H(+). Functionally, tubulin is the major constituent of microtubules, a cylinder consisting of laterally associated linear protofilaments composed of alpha- and beta-tubulin heterodimers. Microtubules grow by the addition of GTP-tubulin dimers to the microtubule end, where a stabilizing cap forms. Below the cap, tubulin dimers are in GDP-bound state, owing to GTPase activity of alpha-tubulin. This is Tubulin alpha-2 chain from Gallus gallus (Chicken).